Reading from the N-terminus, the 147-residue chain is MANVVAEGAYPYCRLTDQPLSVDEVLAAVSGPEQGGIVIFVGNVRDHNAGHDVTRLFYEAYPPMVIRTLMSIIGRCEDKAEGVRVAVAHRTGELQIGDAAVVIGASAPHRAEAFDAARMCIELLKQEVPIWKKEFSSTGAEWVGDRP.

Substrate-binding positions include 43 to 45 (NVR), 109 to 110 (HR), Lys-125, and 132 to 134 (KKE).

This sequence belongs to the MoaE family. In terms of assembly, heterotetramer of 2 MoaD subunits and 2 MoaE subunits. Also stable as homodimer. The enzyme changes between these two forms during catalysis.

It carries out the reaction 2 [molybdopterin-synthase sulfur-carrier protein]-C-terminal-Gly-aminoethanethioate + cyclic pyranopterin phosphate + H2O = molybdopterin + 2 [molybdopterin-synthase sulfur-carrier protein]-C-terminal Gly-Gly + 2 H(+). It functions in the pathway cofactor biosynthesis; molybdopterin biosynthesis. Converts molybdopterin precursor Z into molybdopterin. This requires the incorporation of two sulfur atoms into precursor Z to generate a dithiolene group. The sulfur is provided by MoaD. The protein is Molybdopterin synthase catalytic subunit 1 (moaE1) of Mycobacterium tuberculosis (strain ATCC 25618 / H37Rv).